A 322-amino-acid polypeptide reads, in one-letter code: 5'-AMP-activated protein kinase subunit gamma (322 aa).

CBS domains are found at residues 37 to 97, 118 to 181, 194 to 253, and 262 to 322; these read VSYR…NPDK, VDQL…CRET, ITQD…YNDL, and MRRS…LGSN. ADP is bound by residues I42, R146, 166 to 169, and T195; that span reads TQYR. Residues T195, K200, and 221 to 222 contribute to the AMP site; that span reads SS. ATP contacts are provided by residues T195, K200, and 221–222; that span reads SS. ADP is bound by residues 221–222, 291–293, and 309–312; these read SS, RVH, and TLSD. Residue 309-312 participates in AMP binding; the sequence is TLSD. 309 to 312 provides a ligand contact to ATP; that stretch reads TLSD.

Belongs to the 5'-AMP-activated protein kinase gamma subunit family. As to quaternary structure, AMPK is a heterotrimer of an alpha catalytic subunit (SNF1), a beta (SIP1, SIP2 or GAL83) and a gamma non-catalytic subunits (SNF4). Note=Interaction between SNF1 and SNF4 is inhibited by high levels of glucose.

The protein localises to the nucleus. It localises to the cytoplasm. Functionally, adenine nucleotides-binding subunit gamma of AMP-activated protein kinase (AMPK), an energy sensor protein kinase that plays a key role in regulating cellular energy metabolism. In response to reduction of intracellular ATP levels, AMPK activates energy-producing pathways and inhibits energy-consuming processes: inhibits protein, carbohydrate and lipid biosynthesis, as well as cell growth and proliferation. AMPK acts via direct phosphorylation of metabolic enzymes, and by longer-term effects via phosphorylation of transcription regulators. Gamma non-catalytic subunit mediates binding to AMP, ADP and ATP, leading to activate or inhibit AMPK: AMP-binding results in allosteric activation of alpha catalytic subunit (SNF1) both by inducing phosphorylation and preventing dephosphorylation of catalytic subunits. The chain is 5'-AMP-activated protein kinase subunit gamma (SNF4) from Saccharomyces cerevisiae (strain ATCC 204508 / S288c) (Baker's yeast).